Reading from the N-terminus, the 257-residue chain is Methylthioribulose-1-phosphate dehydratase (257 aa).

C107 serves as a coordination point for substrate. Zn(2+)-binding residues include H125 and H127. The active-site Proton donor/acceptor is the E148. Zn(2+) is bound at residue H210.

It belongs to the aldolase class II family. MtnB subfamily. Zn(2+) is required as a cofactor.

It is found in the cytoplasm. It carries out the reaction 5-(methylsulfanyl)-D-ribulose 1-phosphate = 5-methylsulfanyl-2,3-dioxopentyl phosphate + H2O. It participates in amino-acid biosynthesis; L-methionine biosynthesis via salvage pathway; L-methionine from S-methyl-5-thio-alpha-D-ribose 1-phosphate: step 2/6. Its function is as follows. Catalyzes the dehydration of methylthioribulose-1-phosphate (MTRu-1-P) into 2,3-diketo-5-methylthiopentyl-1-phosphate (DK-MTP-1-P). The chain is Methylthioribulose-1-phosphate dehydratase from Lachancea thermotolerans (strain ATCC 56472 / CBS 6340 / NRRL Y-8284) (Yeast).